A 418-amino-acid chain; its full sequence is Putative ion-transport protein YfeO (418 aa).

12 consecutive transmembrane segments (helical) span residues 10–30, 54–74, 99–119, 120–140, 149–169, 186–206, 223–243, 258–278, 300–320, 322–342, 343–363, and 371–391; these read LLLSLPAVAIGIASSLILIVV, DSPFWIIAILTLTGIAVGLVI, ALPGLIVALILGLAGGVSLGP, EHPIMTVNIALAVAIGARLLP, ILASAGTIGALFGTPVAAALI, LFAPLMAAAAGALTTGLFFHP, ILSGAIVAAIAIAAGMIAVWC, VLMLGVGGFILGILGVIAGPV, DYFLLAVIKLAALVVAAASGF, GGRIFPAVFVGVALGLMLHEH, VPAVPAAITVSCAILGIVLVV, and LFMAAVVVPNTTLLPLLCIVM.

This sequence belongs to the chloride channel (TC 2.A.49) family.

The protein resides in the cell membrane. This is Putative ion-transport protein YfeO from Escherichia coli O7:K1 (strain IAI39 / ExPEC).